Here is a 335-residue protein sequence, read N- to C-terminus: Aliphatic sulfonates import ATP-binding protein SsuB (335 aa).

Residues 74 to 293 form the ABC transporter domain; that stretch reads VRLTRVSKRY…ARASAAFAAL (220 aa). 106–113 lines the ATP pocket; the sequence is GRSGCGKS. Residues 308–335 are disordered; it reads APAAPNAAGPEGASRGRAAPASGLRWAV.

The protein belongs to the ABC transporter superfamily. Aliphatic sulfonates importer (TC 3.A.1.17.2) family. As to quaternary structure, the complex is composed of two ATP-binding proteins (SsuB), two transmembrane proteins (SsuC) and a solute-binding protein (SsuA).

It is found in the cell inner membrane. The catalysed reaction is ATP + H2O + aliphatic sulfonate-[sulfonate-binding protein]Side 1 = ADP + phosphate + aliphatic sulfonateSide 2 + [sulfonate-binding protein]Side 1.. Its function is as follows. Part of the ABC transporter complex SsuABC involved in aliphatic sulfonates import. Responsible for energy coupling to the transport system. In Burkholderia mallei (strain ATCC 23344), this protein is Aliphatic sulfonates import ATP-binding protein SsuB.